The sequence spans 141 residues: Oleosin L (141 aa).

3 consecutive transmembrane segments (helical) span residues 23–43 (VLFF…LALA), 46–66 (VVLM…ILPV), and 74–94 (AAAF…LIWV). The short motif at 54–65 (PVFLLLSPVILP) is the Proline-knot element.

This sequence belongs to the oleosin family. Expressed in megagametophytes (at protein level).

It is found in the lipid droplet. The protein localises to the membrane. The chain is Oleosin L from Pinus massoniana (Chinese red pine).